The chain runs to 461 residues: Thyroid hormone receptor beta (461 aa).

A disordered region spans residues 1–24 (MTPNSMTENGLPAWDKQKPRPDRG). The segment at 1–106 (MTPNSMTENG…IPSYLDKDEL (106 aa)) is modulating. Basic and acidic residues predominate over residues 15 to 24 (DKQKPRPDRG). Positions 107, 110, 124, 127, 145, 151, 161, and 164 each coordinate Zn(2+). 2 NR C4-type zinc fingers span residues 107-127 (CVVC…CEGC) and 145-169 (CKYE…FKKC). Positions 107 to 181 (CVVCGDKATG…VGMATDLVLD (75 aa)) form a DNA-binding region, nuclear receptor. One can recognise an NR LBD domain in the interval 217-461 (EEWELIKTVT…PPLFLEVFED (245 aa)). Positions 244–461 (KFLPEDIGQA…PPLFLEVFED (218 aa)) are interaction with NR2F6. 3,3',5-triiodo-L-thyronine-binding residues include Arg282, Asn331, and His435. 3 residues coordinate L-thyroxine: Arg282, Asn331, and His435.

The protein belongs to the nuclear hormone receptor family. NR1 subfamily. As to quaternary structure, binds DNA as a dimer; homodimer and heterodimer with RXRB. Interacts with the coactivators NCOA1/SRC1, NCOA2/GRIP1, NCOA7 and MED1/TRAP220 in a ligand-inducible manner. Interacts with the corepressor NCOR1 in absence of ligand. Interacts with C1D. Interacts with NR2F6; the interaction impairs the binding of the THRB homodimer and THRB:RXRB heterodimer to T3 response elements. Interacts with PRMT2 and THRSP. Interacts with TACC1; this interaction is decreased in the presence of thyroid hormone T3.

The protein resides in the nucleus. Its function is as follows. Nuclear hormone receptor that can act as a repressor or activator of transcription. High affinity receptor for thyroid hormones, including triiodothyronine and thyroxine. The sequence is that of Thyroid hormone receptor beta (Thrb) from Mus musculus (Mouse).